A 316-amino-acid chain; its full sequence is Acetyl-coenzyme A carboxylase carboxyl transferase subunit beta (316 aa).

The region spanning 39-308 (LWHKCSKCGV…TPPMVLWETM (270 aa)) is the CoA carboxyltransferase N-terminal domain. Positions 43, 46, 62, and 65 each coordinate Zn(2+). The C4-type zinc-finger motif lies at 43–65 (CSKCGVLTYTKDLRANQMVCVEC).

The protein belongs to the AccD/PCCB family. In terms of assembly, acetyl-CoA carboxylase is a heterohexamer composed of biotin carboxyl carrier protein (AccB), biotin carboxylase (AccC) and two subunits each of ACCase subunit alpha (AccA) and ACCase subunit beta (AccD). Requires Zn(2+) as cofactor.

The protein resides in the cytoplasm. The catalysed reaction is N(6)-carboxybiotinyl-L-lysyl-[protein] + acetyl-CoA = N(6)-biotinyl-L-lysyl-[protein] + malonyl-CoA. It participates in lipid metabolism; malonyl-CoA biosynthesis; malonyl-CoA from acetyl-CoA: step 1/1. In terms of biological role, component of the acetyl coenzyme A carboxylase (ACC) complex. Biotin carboxylase (BC) catalyzes the carboxylation of biotin on its carrier protein (BCCP) and then the CO(2) group is transferred by the transcarboxylase to acetyl-CoA to form malonyl-CoA. The protein is Acetyl-coenzyme A carboxylase carboxyl transferase subunit beta of Nostoc sp. (strain PCC 7120 / SAG 25.82 / UTEX 2576).